The sequence spans 291 residues: 3-hydroxy-5-phosphonooxypentane-2,4-dione thiolase (291 aa).

The active-site Schiff-base intermediate with substrate is Lys-203.

It belongs to the DeoC/FbaB aldolase family. Homodecamer.

The protein localises to the cytoplasm. It catalyses the reaction dihydroxyacetone phosphate + acetyl-CoA = 3-hydroxy-2,4-dioxopentyl phosphate + CoA. Involved in the degradation of phospho-AI-2, thereby terminating induction of the lsr operon and closing the AI-2 signaling cycle. Catalyzes the transfer of an acetyl moiety from 3-hydroxy-5-phosphonooxypentane-2,4-dione to CoA to form glycerone phosphate and acetyl-CoA. The sequence is that of 3-hydroxy-5-phosphonooxypentane-2,4-dione thiolase from Photorhabdus laumondii subsp. laumondii (strain DSM 15139 / CIP 105565 / TT01) (Photorhabdus luminescens subsp. laumondii).